A 93-amino-acid chain; its full sequence is Large ribosomal subunit protein bL36m (93 aa).

The transit peptide at 1–35 (MFLQTLRLTMPRMFLHMKPSPITITRACTVPSLLS) directs the protein to the mitochondrion.

The protein belongs to the bacterial ribosomal protein bL36 family. As to quaternary structure, component of the mitochondrial large ribosomal subunit (mt-LSU). Mature yeast 74S mitochondrial ribosomes consist of a small (37S) and a large (54S) subunit. The 37S small subunit contains a 15S ribosomal RNA (15S mt-rRNA) and 34 different proteins. The 54S large subunit contains a 21S rRNA (21S mt-rRNA) and 46 different proteins. bL36m has a zinc binding site.

The protein localises to the mitochondrion. Component of the mitochondrial ribosome (mitoribosome), a dedicated translation machinery responsible for the synthesis of mitochondrial genome-encoded proteins, including at least some of the essential transmembrane subunits of the mitochondrial respiratory chain. The mitoribosomes are attached to the mitochondrial inner membrane and translation products are cotranslationally integrated into the membrane. bL36m may be involved in a process influencing telomere capping. The chain is Large ribosomal subunit protein bL36m (RTC6) from Saccharomyces cerevisiae (strain ATCC 204508 / S288c) (Baker's yeast).